The following is a 100-amino-acid chain: Small ribosomal subunit protein uS14 (100 aa).

This sequence belongs to the universal ribosomal protein uS14 family. Part of the 30S ribosomal subunit. Contacts proteins S3 and S10.

In terms of biological role, binds 16S rRNA, required for the assembly of 30S particles and may also be responsible for determining the conformation of the 16S rRNA at the A site. This chain is Small ribosomal subunit protein uS14, found in Prochlorococcus marinus (strain NATL2A).